The following is a 224-amino-acid chain: Type VII secretion system protein EsaE (224 aa).

As to quaternary structure, interacts with EssD.

In terms of biological role, component of the type VII secretion system (Ess). Plays a role in Esx protein secretion. Plays an essential role in the processing and secretion of EssD. This is Type VII secretion system protein EsaE from Staphylococcus aureus (strain USA300).